Here is a 200-residue protein sequence, read N- to C-terminus: Superoxide dismutase [Fe] (200 aa).

4 residues coordinate Fe cation: H28, H80, D162, and H166.

The protein belongs to the iron/manganese superoxide dismutase family. Homodimer. Requires Fe cation as cofactor.

The catalysed reaction is 2 superoxide + 2 H(+) = H2O2 + O2. In terms of biological role, destroys superoxide anion radicals which are normally produced within the cells and which are toxic to biological systems. In Nostoc sp. (strain PCC 7120 / SAG 25.82 / UTEX 2576), this protein is Superoxide dismutase [Fe] (sodB).